The chain runs to 83 residues: Cytochrome b559 subunit alpha (83 aa).

Residues 21 to 35 (VIHSITIPSLFIAGW) traverse the membrane as a helical segment. H23 lines the heme pocket.

This sequence belongs to the PsbE/PsbF family. As to quaternary structure, heterodimer of an alpha subunit and a beta subunit. PSII is composed of 1 copy each of membrane proteins PsbA, PsbB, PsbC, PsbD, PsbE, PsbF, PsbH, PsbI, PsbJ, PsbK, PsbL, PsbM, PsbT, PsbX, PsbY, PsbZ, Psb30/Ycf12, at least 3 peripheral proteins of the oxygen-evolving complex and a large number of cofactors. It forms dimeric complexes. It depends on heme b as a cofactor.

It localises to the plastid. Its subcellular location is the chloroplast thylakoid membrane. Its function is as follows. This b-type cytochrome is tightly associated with the reaction center of photosystem II (PSII). PSII is a light-driven water:plastoquinone oxidoreductase that uses light energy to abstract electrons from H(2)O, generating O(2) and a proton gradient subsequently used for ATP formation. It consists of a core antenna complex that captures photons, and an electron transfer chain that converts photonic excitation into a charge separation. In Mesembryanthemum crystallinum (Common ice plant), this protein is Cytochrome b559 subunit alpha.